Here is a 506-residue protein sequence, read N- to C-terminus: Gamma-aminobutyric acid receptor subunit epsilon (506 aa).

Residues 1-17 form the signal peptide; it reads MLPKVLLMLLNMFLALQ. At 18–277 the chain is on the extracellular side; sequence WRVGPHIKLE…MTFFFNVSRR (260 aa). Residues 32–65 are disordered; sequence AQDKVVFGPQPQPSGKKLPARETELTADHTTERP. Positions 50–65 are enriched in basic and acidic residues; it reads PARETELTADHTTERP. N-linked (GlcNAc...) asparagine glycosylation is present at Asn-135. A disulfide bond links Cys-196 and Cys-210. An N-linked (GlcNAc...) asparagine glycan is attached at Asn-253. A helical membrane pass occupies residues 278 to 298; it reads FGFIVFQNYIPSSVTTMLSWV. The Cytoplasmic segment spans residues 299–308; that stretch reads SFWIKIEAAA. Residues 309-328 traverse the membrane as a helical segment; that stretch reads ARASVGVSSVLTMATLGTFS. At 329–344 the chain is on the extracellular side; sequence RKNFPRVSYLTALDFY. Residues 345 to 365 traverse the membrane as a helical segment; the sequence is IAICFVLCFCTLLEFTVLNFL. Residues 366-485 are Cytoplasmic-facing; sequence TYNNIERQAS…HVYRLDNYSR (120 aa). A helical membrane pass occupies residues 486-506; the sequence is VLFPITFFFFNVVYWVICLNL.

It belongs to the ligand-gated ion channel (TC 1.A.9) family. Gamma-aminobutyric acid receptor (TC 1.A.9.5) subfamily. GABRE sub-subfamily. Heteropentamer, formed by a combination of alpha (GABRA1-6), beta (GABRB1-3), gamma (GABRG1-3), delta (GABRD), epsilon (GABRE), rho (GABRR1-3), pi (GABRP) and theta (GABRQ) chains, each subunit exhibiting distinct physiological and pharmacological properties. Expressed in brain and heart. Strongly expressed in locus ceruleus from the first postnatal day. Weakly expressed in other brainstem nuclei and in the hypothalamus. Found in the cerebral cortex of pups.

It is found in the cell membrane. Its subcellular location is the postsynaptic cell membrane. The catalysed reaction is chloride(in) = chloride(out). Functionally, epsilon subunit of the heteropentameric ligand-gated chloride channel gated by gamma-aminobutyric acid (GABA), a major inhibitory neurotransmitter in the brain. GABA-gated chloride channels, also named GABA(A) receptors (GABAAR), consist of five subunits arranged around a central pore and contain GABA active binding site(s) located at the alpha and beta subunit interfaces. When activated by GABA, GABAARs selectively allow the flow of chloride anions across the cell membrane down their electrochemical gradient. GABARs containing epsilon subunit may also permit spontaneous chloride channel activity while preserving the structural information required for GABA-gated openings. GABARs containing epsilon subunit may regulate cardiac function. This is Gamma-aminobutyric acid receptor subunit epsilon from Rattus norvegicus (Rat).